We begin with the raw amino-acid sequence, 167 residues long: ATP synthase subunit b (167 aa).

A helical membrane pass occupies residues 7–25; it reads SFWLTISFVIFVYLIYRPA.

It belongs to the ATPase B chain family. F-type ATPases have 2 components, F(1) - the catalytic core - and F(0) - the membrane proton channel. F(1) has five subunits: alpha(3), beta(3), gamma(1), delta(1), epsilon(1). F(0) has three main subunits: a(1), b(2) and c(10-14). The alpha and beta chains form an alternating ring which encloses part of the gamma chain. F(1) is attached to F(0) by a central stalk formed by the gamma and epsilon chains, while a peripheral stalk is formed by the delta and b chains.

The protein localises to the cell inner membrane. Functionally, f(1)F(0) ATP synthase produces ATP from ADP in the presence of a proton or sodium gradient. F-type ATPases consist of two structural domains, F(1) containing the extramembraneous catalytic core and F(0) containing the membrane proton channel, linked together by a central stalk and a peripheral stalk. During catalysis, ATP synthesis in the catalytic domain of F(1) is coupled via a rotary mechanism of the central stalk subunits to proton translocation. Component of the F(0) channel, it forms part of the peripheral stalk, linking F(1) to F(0). This Rickettsia prowazekii (strain Madrid E) protein is ATP synthase subunit b.